Consider the following 198-residue polypeptide: Recombination protein RecR (198 aa).

The C4-type zinc-finger motif lies at 57 to 72 (CEKCNTFTEAQICEVC). The region spanning 80–175 (TLLCVVETPA…AVTRLARGVP (96 aa)) is the Toprim domain.

This sequence belongs to the RecR family.

May play a role in DNA repair. It seems to be involved in an RecBC-independent recombinational process of DNA repair. It may act with RecF and RecO. In Paraburkholderia xenovorans (strain LB400), this protein is Recombination protein RecR.